A 223-amino-acid polypeptide reads, in one-letter code: Cytotoxic T-lymphocyte protein 4 (223 aa).

The first 35 residues, 1–35 (MAGFGFRRHGVQPDLASRTWPCTALFSLLFIPVFS), serve as a signal peptide directing secretion. The Extracellular segment spans residues 36–161 (KGMHAAQPAV…IDPEPCPDSD (126 aa)). Residues 39–140 (HAAQPAVVLA…VELMYPPPYY (102 aa)) form the Ig-like V-type domain. The homodimerization stretch occupies residues 46 to 50 (VLASS). 2 disulfide bridges follow: cysteine 58-cysteine 129 and cysteine 85-cysteine 103. A glycan (N-linked (GlcNAc...) asparagine) is linked at asparagine 113. The important for interaction with CD80 and CD86 stretch occupies residues 134-139 (MYPPPY). Residue asparagine 145 is glycosylated (N-linked (GlcNAc...) asparagine). A homodimerization region spans residues 150-155 (YVIDPE). The helical transmembrane segment at 162–182 (FLLWILAAVSSGLFFYSFLIT) threads the bilayer. Residues 183–223 (AVSLSKMLKKRSPLTTGVYVKMPPTGPECEKQFQPYFIPIN) lie on the Cytoplasmic side of the membrane. Tyrosine 201 is subject to Phosphotyrosine; by TXK and JAK2.

As to quaternary structure, homodimer; disulfide-linked. Binds to CD80/B7-1 and CD86/B7.2. Interacts with ICOSLG. N-glycosylation is important for dimerization. Post-translationally, phosphorylation at Tyr-201 prevents binding to the AP-2 adapter complex, blocks endocytosis, and leads to retention of CTLA4 on the cell surface.

It is found in the cell membrane. Inhibitory receptor acting as a major negative regulator of T-cell responses. The affinity of CTLA4 for its natural B7 family ligands, CD80 and CD86, is considerably stronger than the affinity of their cognate stimulatory coreceptor CD28. In Canis lupus familiaris (Dog), this protein is Cytotoxic T-lymphocyte protein 4 (CTLA4).